Reading from the N-terminus, the 446-residue chain is MTLFHRLDLIDPYTCTPLIVRETSIVEPSSLFLGFPSFIDEDIEDLFEFSSPNPLDLFETVTDLVKIKKSPSSCKYKVIRRRLEPEYPLKYLCDRVSDLESKFDRLVSPKSDRKYTLTKEIKGSGERKYKWEAEIQGPLERKYKLEAEIEGSGERKYRWTTEIKGGKKDEEGLKLAALKKEKAKAKAIAAAEAEKKKNKNKKKSYNWTTEVKSERENGEVSHTYIIKATTGGEKKKKHEEKEKKEKIETKSKKKEKTRVVVIEEEEEEDDESSEHGAIVLRKAFSRRNGAVRTKKGKNKEMPPEYAAVMIQRAFKAYLIRRSKSLRALRDLAIAKTKLKELRASFHNFSYRRLIARDGEERQKFSEKIIVLLLTVDAIEGVDVMVRGAKRSMVDELEAMLDVVDPQPQGKSLSMRRRTFDMPDSLIRKEIAEGVTQIVQMLETEEE.

Positions 230-252 (TGGEKKKKHEEKEKKEKIETKSK) are disordered. Residues 239–250 (EEKEKKEKIETK) show a composition bias toward basic and acidic residues. The IQ domain occupies 303 to 332 (PEYAAVMIQRAFKAYLIRRSKSLRALRDLA). One can recognise a BAG domain in the interval 330–407 (DLAIAKTKLK…AMLDVVDPQP (78 aa)). Residue Thr443 is modified to Phosphothreonine.

In terms of assembly, binds to the ATPase domain of HSP70/HSC70 chaperones. Interacts with HSP70-11/BIP2.

The protein localises to the endoplasmic reticulum. Its function is as follows. Co-chaperone that regulates diverse cellular pathways, such as programmed cell death and stress responses. Necessary for the proper maintenance of the unfolded protein response (UPR) during heat and cold tolerance. This Arabidopsis thaliana (Mouse-ear cress) protein is BAG family molecular chaperone regulator 7 (BAG7).